We begin with the raw amino-acid sequence, 140 residues long: Putative membrane protein ORF7 (140 aa).

The chain crosses the membrane as a helical span at residues 44–60 (TCAVSFFALFMLIIWVL). Residues 66 to 118 (PEGSTTRGTDAHTQTEGSTTRGTDAHTQTEGSRDQGSMTPEADDLTRPPLGHG) form a disordered region. A compositionally biased stretch (polar residues) spans 68 to 103 (GSTTRGTDAHTQTEGSTTRGTDAHTQTEGSRDQGSM).

The protein resides in the membrane. This is Putative membrane protein ORF7 (ORF7) from Ictalurid herpesvirus 1 (strain Auburn) (IcHV-1).